Here is a 178-residue protein sequence, read N- to C-terminus: RNA pyrophosphohydrolase (178 aa).

A Nudix hydrolase domain is found at 18-171 (PYRPCVGLMV…KRKVYEQVVA (154 aa)). The short motif at 59–80 (GGIDKGEDPAQAALRELYEETG) is the Nudix box element.

The protein belongs to the Nudix hydrolase family. RppH subfamily. A divalent metal cation is required as a cofactor.

Functionally, accelerates the degradation of transcripts by removing pyrophosphate from the 5'-end of triphosphorylated RNA, leading to a more labile monophosphorylated state that can stimulate subsequent ribonuclease cleavage. In Brucella abortus (strain 2308), this protein is RNA pyrophosphohydrolase.